The primary structure comprises 466 residues: Cysteine--tRNA ligase (466 aa).

Residue C28 participates in Zn(2+) binding. A 'HIGH' region motif is present at residues 30-40 (PTVYNYIHIGN). Zn(2+)-binding residues include C208, H233, and E237. Positions 265 to 269 (KMSKS) match the 'KMSKS' region motif. Position 268 (K268) interacts with ATP.

This sequence belongs to the class-I aminoacyl-tRNA synthetase family. In terms of assembly, monomer. Zn(2+) is required as a cofactor.

The protein localises to the cytoplasm. It carries out the reaction tRNA(Cys) + L-cysteine + ATP = L-cysteinyl-tRNA(Cys) + AMP + diphosphate. This chain is Cysteine--tRNA ligase, found in Staphylococcus epidermidis (strain ATCC 35984 / DSM 28319 / BCRC 17069 / CCUG 31568 / BM 3577 / RP62A).